The chain runs to 155 residues: uncharacterized protein (155 aa).

It belongs to the IIV-6 145L family.

This is an uncharacterized protein from Acheta domesticus (House cricket).